We begin with the raw amino-acid sequence, 133 residues long: Snaclec purpureotin subunit alpha (133 aa).

Disulfide bonds link Cys2-Cys13, Cys30-Cys127, and Cys102-Cys119. In terms of domain architecture, C-type lectin spans Phe9–Lys128.

It belongs to the snaclec family. In terms of assembly, homodimer (non-covalently linked) of heterodimer of alpha and beta subunits (disulfide-linked). As to expression, expressed by the venom gland.

The protein resides in the secreted. Snaclec that induces platelet aggregation without any cofactor in a dose-dependent manner. Its platelet aggregation effect is blocked by echicetin, suggesting it is a GPIb-binding protein which binds to the same or a closely related GPIb site on platelets as echicetin. The polypeptide is Snaclec purpureotin subunit alpha (Trimeresurus purpureomaculatus (Mangrove pit viper)).